A 131-amino-acid chain; its full sequence is Protein TAP2 (131 aa).

The signal sequence occupies residues 1-22 (MAKSSPTYTVLFLLGLLALSTA). Residues 75-101 (ARSGGETDVKKMEGSMPDQGKTAGRDQ) are disordered.

In terms of tissue distribution, tapetum of anthers.

The chain is Protein TAP2 (TAP2) from Antirrhinum majus (Garden snapdragon).